A 378-amino-acid chain; its full sequence is Alginate lyase (378 aa).

A signal peptide spans 1 to 28 (MQTPKLIRPTLLSMAILSSMAWATGASA). Substrate contacts are provided by residues 67-68 (SK), 140-141 (HT), and tyrosine 258.

The protein belongs to the polysaccharide lyase 5 family.

The protein resides in the periplasm. It carries out the reaction Eliminative cleavage of alginate to give oligosaccharides with 4-deoxy-alpha-L-erythro-hex-4-enuronosyl groups at their non-reducing ends and beta-D-mannuronate at their reducing end.. With respect to regulation, the monovalent cation sodium enhances activity but is not absolutely required. Catalyzes the depolymerization of alginate by cleaving the beta-1,4 glycosidic bond between two adjacent sugar residues via a beta-elimination mechanism. Degrades deacetylated polymannuronate (polyM) alginate from P.aeruginosa more efficiently than non-deacetylated polyM and alginate from M.pyrifera. AlgL from P.syringae also degrades its own alginate, which may indicate a role in cleaving preformed alginate and/or in determining the length of the alginate polymer. May serve to degrade mislocalized alginate that is trapped in the periplasmic space. The protein is Alginate lyase of Pseudomonas syringae pv. syringae.